Reading from the N-terminus, the 1093-residue chain is Semaphorin 5c (1093 aa).

An N-terminal signal peptide occupies residues 1–34 (MNMLILKLPKMFSQLWLLLILSLLTLEGPQPSTG). N48 carries N-linked (GlcNAc...) asparagine glycosylation. A Sema domain is found at 50 to 495 (SRYISYQDLM…TDLALTRIPA (446 aa)). Disulfide bonds link C118–C128 and C146–C155. 4 N-linked (GlcNAc...) asparagine glycosylation sites follow: N162, N182, N285, and N295. Cystine bridges form between C271/C376 and C296/C338. N341 carries an N-linked (GlcNAc...) asparagine glycan. The region spanning 497–546 (HCSRHVSQSSCLNSMDPYCGWNELVERCMPQPQDSSVLQHWHQAPQITCP) is the PSI domain. TSP type-1 domains lie at 553–605 (DGGW…TNCT), 607–663 (HGGW…PPCP), and 671–726 (DGGW…QSCQ). N603 is a glycosylation site (N-linked (GlcNAc...) asparagine). 6 cysteine pairs are disulfide-bonded: C619/C656, C623/C662, C634/C646, C683/C720, C687/C725, and C698/C710. N-linked (GlcNAc...) asparagine glycosylation occurs at N745. 3 TSP type-1 domains span residues 794–834 (DSAD…HACP), 850–901 (HGEW…VPCE), and 904–953 (LGWS…NECE). Cystine bridges form between C862–C895, C866–C900, and C877–C885. A helical membrane pass occupies residues 960–980 (TATLPIVIFVGLLFTVACCLA). Residues N998 and N1046 are each glycosylated (N-linked (GlcNAc...) asparagine). Residues 1018–1056 (PTKDYYDQRPKRQSSFRMPAKTSNLGNGNGTLNRNNMHQ) form a disordered region. Positions 1041-1053 (NLGNGNGTLNRNN) are enriched in low complexity.

The protein belongs to the semaphorin family. In terms of tissue distribution, in egg chambers, high levels of expression in the follicle cells, with little to no expression in the germ cells (at protein level). In stage 3 to 7 egg chambers, planar polarized at the basal epithelial surface (at protein level).

It is found in the apical cell membrane. Its subcellular location is the lateral cell membrane. The protein resides in the endosome. Functionally, regulates the motility of migrating epithelial cells by providing guidance cues within the migratory environment and may also play a role in development of the olfactory system. May act as a positive axonal guidance cue. Function in neurons is essential for adult survival and is important for climbing behavior. Promotes collective migration of follicular epithelial cells in egg chambers, likely by acting at the leading edge of the basal epithelium cells to provide guidance cues across the cell boundary to the trailing edge of the cell ahead. The transmembrane receptor PlexA on the trailing edge of the cell ahead, appears to transduce this signal to suppress the formation of protrusions. Involved in olfactory avoidance behavior. The polypeptide is Semaphorin 5c (Drosophila melanogaster (Fruit fly)).